Here is a 124-residue protein sequence, read N- to C-terminus: UPF0212 protein Hlac_0869 (124 aa).

The protein belongs to the UPF0212 family.

The polypeptide is UPF0212 protein Hlac_0869 (Halorubrum lacusprofundi (strain ATCC 49239 / DSM 5036 / JCM 8891 / ACAM 34)).